The sequence spans 244 residues: Orotidine 5'-phosphate decarboxylase (244 aa).

Residues Asp14, Lys36, 63 to 72 (DLKFHDIPNT), Thr127, Arg188, Gln197, Gly217, and Arg218 contribute to the substrate site. Lys65 (proton donor) is an active-site residue.

It belongs to the OMP decarboxylase family. Type 1 subfamily. Homodimer.

It catalyses the reaction orotidine 5'-phosphate + H(+) = UMP + CO2. Its pathway is pyrimidine metabolism; UMP biosynthesis via de novo pathway; UMP from orotate: step 2/2. Functionally, catalyzes the decarboxylation of orotidine 5'-monophosphate (OMP) to uridine 5'-monophosphate (UMP). The protein is Orotidine 5'-phosphate decarboxylase of Syntrophotalea carbinolica (strain DSM 2380 / NBRC 103641 / GraBd1) (Pelobacter carbinolicus).